The sequence spans 346 residues: MVWLANPERYGQMQYRYCGKSGLRLPALSLGLWHNFGHVNALESQRAILRKAFDLGITHFDLANNYGPPPGSAEENFGRLLREDFAAYRDELIISTKAGYDMWPGPYGSGGSRKYLLASLDQSLKRMGLEYVDIFYSHRVDENTPMEETASALAHAVQSGKALYVGISSYSPERTQKMVELLREWKIPLLIHQPSYNLLNRWVDKSGLLDTLQNNGVGCIAFTPLAQGLLTGKYLNGIPQDSRMHREGNKVRGLTPKMLTEANLNSLRLLNEMAQQRGQSMAQMALSWLLKDDRVTSVLIGASRAEQLEENVQALNNLTFSTKELAQIDQHIADGELNLWQASSDK.

NADP(+) is bound by residues tryptophan 33, aspartate 61, tyrosine 66, serine 168, glutamine 193, threonine 223, leucine 225, glutamine 227, lysine 233, serine 303, glutamine 307, and asparagine 311.

Belongs to the shaker potassium channel beta subunit family. In terms of assembly, homotetramer. Homooctamer.

The enzyme catalyses a primary alcohol + NADP(+) = an aldehyde + NADPH + H(+). It carries out the reaction hydroxyacetone + NADP(+) = methylglyoxal + NADPH + H(+). Functionally, aldo-keto reductase that catalyzes the stereospecific, NADPH-dependent reduction of L-glyceraldehyde 3-phosphate (L-GAP) to L-glycerol 3-phosphate (L-G3P). The physiological role of Gpr is the detoxification of L-GAP, which may be formed via non-enzymatic and/or enzymatic racemization of D-GAP. Also contributes to cellular methylglyoxal detoxification by catalyzing the NADPH-dependent conversion of methylglyoxal to acetol. However, the catalytic efficiency of methylglyoxal reductase activity is more than 2 orders of magnitude lower than the L-GAP reductase activity. In addition, exhibits activity with glyoxal and probably plays a significant role in detoxification of glyoxal in vivo. Shows broad specificity and can use aromatic aldehydes such as 4-nitrobenzaldehyde and benzaldehyde, D,L-glyceraldehyde, phenylglyoxal, isatin and the model substrate 4-nitrobenzaldehyde. In Escherichia coli (strain K12), this protein is L-glyceraldehyde 3-phosphate reductase.